Here is a 200-residue protein sequence, read N- to C-terminus: Transcription factor FapR (200 aa).

Belongs to the FapR family.

Functionally, transcriptional factor involved in regulation of membrane lipid biosynthesis by repressing genes involved in fatty acid and phospholipid metabolism. The sequence is that of Transcription factor FapR from Thermoanaerobacter pseudethanolicus (strain ATCC 33223 / 39E) (Clostridium thermohydrosulfuricum).